The sequence spans 154 residues: Transcriptional repressor NrdR (154 aa).

The segment at 1–22 (MRCPFCGNDDTQVKDSRPTEDN) is disordered. A zinc finger lies at 3–34 (CPFCGNDDTQVKDSRPTEDNSAIRRRRFCPAC). A compositionally biased stretch (basic and acidic residues) spans 11 to 22 (TQVKDSRPTEDN). The ATP-cone domain maps to 49 to 139 (LTVVKSGGSR…VYKDFREVTD (91 aa)).

This sequence belongs to the NrdR family. Zn(2+) is required as a cofactor.

Functionally, negatively regulates transcription of bacterial ribonucleotide reductase nrd genes and operons by binding to NrdR-boxes. The protein is Transcriptional repressor NrdR of Rhodospirillum centenum (strain ATCC 51521 / SW).